A 439-amino-acid chain; its full sequence is Adenylosuccinate synthetase (439 aa).

GTP is bound by residues 14–20 (GDEGKGK) and 42–44 (GHT). Residue Asp-15 is the Proton acceptor of the active site. Residues Asp-15 and Gly-42 each contribute to the Mg(2+) site. Residues 15–18 (DEGK), 40–43 (NAGH), Thr-130, Arg-144, Gln-225, Thr-240, and Arg-304 each bind IMP. The Proton donor role is filled by His-43. 300–306 (TTTGRRR) contacts substrate. GTP-binding positions include Arg-306, 332–334 (KLD), and 414–416 (SLG).

Belongs to the adenylosuccinate synthetase family. Homodimer. The cofactor is Mg(2+).

The protein localises to the cytoplasm. The catalysed reaction is IMP + L-aspartate + GTP = N(6)-(1,2-dicarboxyethyl)-AMP + GDP + phosphate + 2 H(+). It participates in purine metabolism; AMP biosynthesis via de novo pathway; AMP from IMP: step 1/2. In terms of biological role, plays an important role in the de novo pathway of purine nucleotide biosynthesis. Catalyzes the first committed step in the biosynthesis of AMP from IMP. This chain is Adenylosuccinate synthetase, found in Synechococcus sp. (strain CC9902).